The following is a 445-amino-acid chain: Proline--tRNA ligase (445 aa).

The protein belongs to the class-II aminoacyl-tRNA synthetase family. ProS type 2 subfamily. In terms of assembly, homodimer.

It is found in the cytoplasm. The enzyme catalyses tRNA(Pro) + L-proline + ATP = L-prolyl-tRNA(Pro) + AMP + diphosphate. Catalyzes the attachment of proline to tRNA(Pro) in a two-step reaction: proline is first activated by ATP to form Pro-AMP and then transferred to the acceptor end of tRNA(Pro). This Cereibacter sphaeroides (strain ATCC 17025 / ATH 2.4.3) (Rhodobacter sphaeroides) protein is Proline--tRNA ligase.